A 166-amino-acid chain; its full sequence is Putative methyltransferase Rv1506c (166 aa).

It belongs to the methyltransferase superfamily.

In terms of biological role, probably plays a role in host phagosome maturation arrest, as well as a role in the synthesis of acyltrehalose-containing glycolipids. In Mycobacterium tuberculosis (strain ATCC 25618 / H37Rv), this protein is Putative methyltransferase Rv1506c.